The following is an 89-amino-acid chain: MCLLKLPVVLIVLLVALHHLKATPIESNQVEKRKCNTATCATQRLANFLIRSSNNLGAILSPTNVGSNTYGKRSTVDILNREPLNYLPF.

The N-terminal stretch at 1 to 22 (MCLLKLPVVLIVLLVALHHLKA) is a signal peptide. The propeptide occupies 23–31 (TPIESNQVE). Cysteines 35 and 40 form a disulfide. A Tyrosine amide modification is found at Tyr70. Residues 74-89 (STVDILNREPLNYLPF) constitute a propeptide that is removed on maturation.

Belongs to the calcitonin family. As to quaternary structure, can form homodimers. Interacts with IDE and INS. Interaction with INS inhibits homodimerization and fibril formation.

It is found in the secreted. Amylin/IAPP is a glucoregulatory peptide hormone that plays an important role in the regulation of energy homeostasis. Selectively inhibits insulin-stimulated glucose utilization and glycogen deposition in muscle, while not affecting adipocyte glucose metabolism. IAPP function is mediated by the CALCR-RAMPs (AMYRs) receptor complexes. Amylin can also bind CALCR receptor in the absence of RAMPs, although it is more selective for AMYRs. This Felis catus (Cat) protein is Islet amyloid polypeptide (IAPP).